Here is a 31-residue protein sequence, read N- to C-terminus: Kunitz-type serine protease inhibitor RsTIQ2 (31 aa).

One can recognise a BPTI/Kunitz inhibitor domain in the interval 1–31; that stretch reads EAVDFDSQCVPTADPGKCKFYFPMWNVNVFT.

Serine protease inhibitor. Inhibits trypsin, elastase, plasmin and kallikrein. The chain is Kunitz-type serine protease inhibitor RsTIQ2 from Rhipicephalus sanguineus (Brown dog tick).